The chain runs to 169 residues: Photosystem I assembly protein Ycf3 (169 aa).

TPR repeat units follow at residues 35–68 (AFTYYRDGMSAQSEGEYAEALQNYYEAMRLETDP), 72–105 (SYILYNIGLVHTSNGEHTKALEYYFQALERNPSL), and 120–153 (GEQAIRQGDPETAEAWFDQAAEYWEQAIALAPGN).

This sequence belongs to the Ycf3 family.

The protein localises to the plastid. It is found in the chloroplast thylakoid membrane. In terms of biological role, essential for the assembly of the photosystem I (PSI) complex. May act as a chaperone-like factor to guide the assembly of the PSI subunits. The protein is Photosystem I assembly protein Ycf3 of Pinus koraiensis (Korean pine).